The sequence spans 185 residues: MAPKGGSKQQSEEDLLLQDFSRNLSAKSSALFFGNAFIVSAIPIWLYWRIWHMDLIQSAVLYSVMTLVSTYLVAFAYKNVKFVLKHKVAQKREDAVSKEVTRKLSEADNRKMSRKEKDERILWKKNEVADYEATTFSIFYNNTLFLVLVIVASFFILKNFNPTVNYILSISASSGLIALLSTGSK.

Residue methionine 1 is modified to N-acetylmethionine. At 1 to 27 (MAPKGGSKQQSEEDLLLQDFSRNLSAK) the chain is on the lumenal side. Phosphoserine occurs at positions 7 and 11. The helical transmembrane segment at 28 to 48 (SSALFFGNAFIVSAIPIWLYW) threads the bilayer. Residues 49-54 (RIWHMD) lie on the Cytoplasmic side of the membrane. Residues 55 to 76 (LIQSAVLYSVMTLVSTYLVAFA) traverse the membrane as a helical segment. Residues 77-135 (YKNVKFVLKHKVAQKREDAVSKEVTRKLSEADNRKMSRKEKDERILWKKNEVADYEATT) lie on the Lumenal side of the membrane. Position 105 is a phosphoserine (serine 105). The helical transmembrane segment at 136 to 157 (FSIFYNNTLFLVLVIVASFFIL) threads the bilayer. Residues 158–163 (KNFNPT) are Cytoplasmic-facing. The helical transmembrane segment at 164-184 (VNYILSISASSGLIALLSTGS) threads the bilayer.

The protein belongs to the TRAP-gamma family. As to quaternary structure, heterotetramer of TRAP-alpha, TRAP-beta, TRAP-delta and TRAP-gamma.

The protein resides in the endoplasmic reticulum membrane. Its function is as follows. TRAP proteins are part of a complex whose function is to bind calcium to the ER membrane and thereby regulate the retention of ER resident proteins. This is Translocon-associated protein subunit gamma (Ssr3) from Mus musculus (Mouse).